The following is a 321-amino-acid chain: Probable UDP-sugar transporter protein SLC35A4 (321 aa).

Topologically, residues 1 to 22 (MYSVNIEPDGSNHSPSRKRLKQ) are cytoplasmic. Residues 23 to 43 (ILWGLMLVLSVTIYGSHAPLI) traverse the membrane as a helical segment. The Lumenal segment spans residues 44-56 (YLCKVNGEIPFSS). Residues 57–77 (SAVVLLIELSKFVISLVFFLI) traverse the membrane as a helical segment. Residues 78-91 (QDWKSLKASVSWHL) are Cytoplasmic-facing. Residues 92 to 112 (AAPYAVPAVLYGANNNLVVYI) traverse the membrane as a helical segment. At 113–119 (QHFMDPS) the chain is on the lumenal side. The helical transmembrane segment at 120 to 140 (SFQVLSNLKIVSTAVLYSLFL) threads the bilayer. The Cytoplasmic portion of the chain corresponds to 141 to 149 (RQRLSVRRW). The helical transmembrane segment at 150-170 (LSVFLLLAAGVFYSYGGIQDL) threads the bilayer. At 171 to 180 (EKVSSDTNLY) the chain is on the lumenal side. The chain crosses the membrane as a helical span at residues 181-201 (VTLPGLLLMLAYCLISGLSAV). Over 202 to 211 (YTEMTLKTQK) the chain is Cytoplasmic. The chain crosses the membrane as a helical span at residues 212–232 (IPLNMQNLYLYSFGIIINLTA). Residues 233 to 247 (HLTSSKNSDFFDGFS) are Lumenal-facing. A helical transmembrane segment spans residues 248–268 (VWVWVIILSQALNGLIMSLVM). Residues 269-321 (KLSNNITRLFIISFSMLANGFLSFILFQLQLTALFFLAVVLIGLAVYMYYGMK) are Cytoplasmic-facing.

This sequence belongs to the nucleotide-sugar transporter family. SLC35A subfamily.

It is found in the golgi apparatus membrane. The enzyme catalyses CDP-L-ribitol(in) + CDP(out) = CDP-L-ribitol(out) + CDP(in). Functionally, mediates the transport of CDP-ribitol. Does not exhibit CMP-sialic acid, UDP-galactose and UDP-N-acetylglucosamine transport activity. In Xenopus tropicalis (Western clawed frog), this protein is Probable UDP-sugar transporter protein SLC35A4.